The following is a 113-amino-acid chain: uncharacterized protein (113 aa).

The CHY-type; degenerate zinc-finger motif lies at 16–96; that stretch reads LVDNETRCFH…STVHCKYCNH (81 aa). Positions 23, 25, 46, 49, 73, 76, 91, and 94 each coordinate Zn(2+).

It is found in the cytoplasm. Its subcellular location is the nucleus. This is an uncharacterized protein from Schizosaccharomyces pombe (strain 972 / ATCC 24843) (Fission yeast).